Reading from the N-terminus, the 755-residue chain is MFEIIKKSIEWGGRTLSLETGKIARQADGSVVVNYGDTSILVTVVRKKKEEIVDFLPLNVQFIAKSYAMGRIPGGFFKREGKPSDRETLISRVIDRSIRPLFLEGFHDEISIVCNLLTYDTVNPPEVPALIGAVAALAISGVPFHFIIAGVLVGCDGNNNYILNPSVQEMKVSSLDLFLSGDERSILMVESEAKELPEENILNAIKFGHEHLQPVIKLIKEFADTIGNKFDSFAPIDISDIMQDLEKHSKDFEEAYSQTVKQERAQTLETIRNNILNPLKEAGKDEKLITQAVKNFERSLLRKIIREKGTRIDGRKYDEIRQIEVEVDILSRTHGSALFTRGSTQALVVTALGTTQDEQIVDDIEGDRREHFMLHYNFPSFAVGDASAIRAPGRREIGHGKLAWKAIHPVLPDKSEFPYTIRVVSEIMESDGSSSMATVCGTSLALMDTGVPIKSPVAGIAMGLIKDKNDYVILSDILGDEDYLGDMDFKVAGTSEGITALQMDMKISGISFEIVEKSLEQAKAGRLHILEKMNSVISEHSDDVKGHAPRMVSFYIDKDKISAAIGAKGKNIRSVCERSNAKIEIGDDGKVSVFAMSSAEAEIAKNMMIDSITELEQGAIVDVKVVKIDKSIVELELFNGRKGKMHISEVANQHIESIESILKQGDTFKALVIDFEKGGCPKLSRRRVDQETGDFFEGELYNEEKKDSSNDRDYYNSPFNRKSGHRKRPVHSRSSFSNRNNRPKFGNDDSSSSFY.

The Mg(2+) site is built by D482 and D488. One can recognise a KH domain in the interval P549–M608. The S1 motif domain occupies G618 to R686. Positions N702–Y714 are enriched in basic and acidic residues. Residues N702 to Y755 form a disordered region. Positions K722–H731 are enriched in basic residues.

This sequence belongs to the polyribonucleotide nucleotidyltransferase family. Mg(2+) is required as a cofactor.

The protein resides in the cytoplasm. The catalysed reaction is RNA(n+1) + phosphate = RNA(n) + a ribonucleoside 5'-diphosphate. Involved in mRNA degradation. Catalyzes the phosphorolysis of single-stranded polyribonucleotides processively in the 3'- to 5'-direction. The sequence is that of Polyribonucleotide nucleotidyltransferase from Wolbachia sp. subsp. Brugia malayi (strain TRS).